Here is a 213-residue protein sequence, read N- to C-terminus: Orotate phosphoribosyltransferase (213 aa).

A 5-phospho-alpha-D-ribose 1-diphosphate-binding site is contributed by Lys-26. 34–35 (FF) is a binding site for orotate. 5-phospho-alpha-D-ribose 1-diphosphate contacts are provided by residues 72–73 (YK), Arg-99, Lys-100, Lys-103, His-105, and 124–132 (DDVITAGTA). Orotate-binding residues include Thr-128 and Arg-156.

It belongs to the purine/pyrimidine phosphoribosyltransferase family. PyrE subfamily. Homodimer. The cofactor is Mg(2+).

It carries out the reaction orotidine 5'-phosphate + diphosphate = orotate + 5-phospho-alpha-D-ribose 1-diphosphate. It participates in pyrimidine metabolism; UMP biosynthesis via de novo pathway; UMP from orotate: step 1/2. In terms of biological role, catalyzes the transfer of a ribosyl phosphate group from 5-phosphoribose 1-diphosphate to orotate, leading to the formation of orotidine monophosphate (OMP). In Enterobacter sp. (strain 638), this protein is Orotate phosphoribosyltransferase.